The following is an 817-amino-acid chain: Cargo-transport protein YPP1 (817 aa).

Belongs to the YPP1 family. In terms of assembly, interacts with ribosomes.

The protein localises to the cytoplasmic granule. The protein resides in the cell membrane. Its function is as follows. Involved in endocytosis. The sequence is that of Cargo-transport protein YPP1 (YPP1) from Saccharomyces cerevisiae (strain ATCC 204508 / S288c) (Baker's yeast).